The chain runs to 438 residues: sn-glycerol-3-phosphate-binding periplasmic protein UgpB (438 aa).

An N-terminal signal peptide occupies residues M1–A23. Residues Y65, E89, S144, S270, G307, Y346, and R397 each contribute to the sn-glycerol 3-phosphate site.

This sequence belongs to the bacterial solute-binding protein 1 family. The complex is composed of two ATP-binding proteins (UgpC), two transmembrane proteins (UgpA and UgpE) and a solute-binding protein (UgpB).

It localises to the periplasm. Its function is as follows. Part of the ABC transporter complex UgpBAEC involved in sn-glycerol-3-phosphate (G3P) import. Binds G3P. This is sn-glycerol-3-phosphate-binding periplasmic protein UgpB (ugpB) from Shigella flexneri serotype 5b (strain 8401).